Here is a 267-residue protein sequence, read N- to C-terminus: Flap endonuclease Xni (267 aa).

Asp-115 contacts Mg(2+). The 91-residue stretch at 171–261 (VAPAQLVDFW…LGFNLREIRY (91 aa)) folds into the 5'-3' exonuclease domain. 3 residues coordinate K(+): Leu-182, Val-193, and Ile-196. The interval 195-200 (GIGPKT) is interaction with DNA.

The protein belongs to the Xni family. Mg(2+) is required as a cofactor. It depends on K(+) as a cofactor.

Functionally, has flap endonuclease activity. During DNA replication, flap endonucleases cleave the 5'-overhanging flap structure that is generated by displacement synthesis when DNA polymerase encounters the 5'-end of a downstream Okazaki fragment. The sequence is that of Flap endonuclease Xni from Aeromonas hydrophila subsp. hydrophila (strain ATCC 7966 / DSM 30187 / BCRC 13018 / CCUG 14551 / JCM 1027 / KCTC 2358 / NCIMB 9240 / NCTC 8049).